The sequence spans 288 residues: Elongation factor Ts (288 aa).

The segment at threonine 80–valine 83 is involved in Mg(2+) ion dislocation from EF-Tu.

This sequence belongs to the EF-Ts family.

The protein localises to the cytoplasm. Its function is as follows. Associates with the EF-Tu.GDP complex and induces the exchange of GDP to GTP. It remains bound to the aminoacyl-tRNA.EF-Tu.GTP complex up to the GTP hydrolysis stage on the ribosome. The polypeptide is Elongation factor Ts (Chromobacterium violaceum (strain ATCC 12472 / DSM 30191 / JCM 1249 / CCUG 213 / NBRC 12614 / NCIMB 9131 / NCTC 9757 / MK)).